The following is a 514-amino-acid chain: tRNA-2-methylthio-N(6)-dimethylallyladenosine synthase (514 aa).

Residues 1–21 (MNEEQRKASSVDVLAERDKKA) form a disordered region. Residues 68–186 (RTFLIKTYGC…LPEILEEAYL (119 aa)) enclose the MTTase N-terminal domain. Residues Cys77, Cys113, Cys147, Cys223, Cys227, and Cys230 each coordinate [4Fe-4S] cluster. The Radical SAM core domain occupies 209 to 440 (REGNIKAWVN…KKVGHYSQIA (232 aa)). Positions 442–505 (SKYEGQTVTV…QYSLNGSFIK (64 aa)) constitute a TRAM domain.

The protein belongs to the methylthiotransferase family. MiaB subfamily. In terms of assembly, monomer. It depends on [4Fe-4S] cluster as a cofactor.

It localises to the cytoplasm. It catalyses the reaction N(6)-dimethylallyladenosine(37) in tRNA + (sulfur carrier)-SH + AH2 + 2 S-adenosyl-L-methionine = 2-methylsulfanyl-N(6)-dimethylallyladenosine(37) in tRNA + (sulfur carrier)-H + 5'-deoxyadenosine + L-methionine + A + S-adenosyl-L-homocysteine + 2 H(+). In terms of biological role, catalyzes the methylthiolation of N6-(dimethylallyl)adenosine (i(6)A), leading to the formation of 2-methylthio-N6-(dimethylallyl)adenosine (ms(2)i(6)A) at position 37 in tRNAs that read codons beginning with uridine. This is tRNA-2-methylthio-N(6)-dimethylallyladenosine synthase from Staphylococcus aureus (strain USA300 / TCH1516).